The primary structure comprises 119 residues: MKKIAFIFTKTPHGDAGGREGLDALLATSALTEKVGVFFISDGVLQLLPNQQPDRILARNYIATFKVLPLYDIEECYLCQEDLVMRGLSSVNHFVLDAKVIPAETIREKLVDYDVVLTF.

This sequence belongs to the DsrF/TusC family. As to quaternary structure, heterohexamer, formed by a dimer of trimers. The hexameric TusBCD complex contains 2 copies each of TusB, TusC and TusD. The TusBCD complex interacts with TusE.

The protein resides in the cytoplasm. Part of a sulfur-relay system required for 2-thiolation of 5-methylaminomethyl-2-thiouridine (mnm(5)s(2)U) at tRNA wobble positions. This chain is Protein TusC, found in Photorhabdus laumondii subsp. laumondii (strain DSM 15139 / CIP 105565 / TT01) (Photorhabdus luminescens subsp. laumondii).